The following is a 479-amino-acid chain: MEMLYGIMPEISLLLSALIFQLIGAYSNNTLTHVIAKMAIGFAAILIAILVFHPSWFNGIYWNNTFIVNQSKIYLKIIILIFYIFLTLIYSGYIKVANLKGHSEYIVLMQLGALGGLILVSANDFMVMYLGIEMQGIIGYILTTFNYNNSRSSEAGLKYFILGTVFSAIMLFGISLVYGTTQSIRYDIALHALQNPSSDMAVLVAAILMILVGVLFKLSIAPFHMWTPDIYDGAPLVVVALFSSLPKISVLALLGNLLSELKFASDAFFYIKTIIMVLACLSLIVGAFGALLQQSIQRFIAYSAILNLGYAVLALVANSSNVIRAEISYFYIIIYAASMLGFIAIIINNFTNRANYLKISHLSGLSNVKKLSSILIAIQMFSLVGIPPFAGFISKYIIFTSILKSGMYELIIMGIAAVVIGSYCYLNIVKVMYFLPATVRFQNSSVNFELSLVSIASTIIVISLMIICMLFGEGLNVIV.

A run of 14 helical transmembrane segments spans residues 3–23 (MLYG…FQLI), 40–60 (IGFA…FNGI), 77–97 (IIIL…IKVA), 102–122 (HSEY…LVSA), 125–145 (FMVM…LTTF), 159–179 (YFIL…LVYG), 200–220 (MAVL…KLSI), 234–254 (APLV…LALL), 268–288 (FFYI…VGAF), 299–319 (FIAY…VANS), 327–347 (ISYF…AIII), 373–393 (SILI…AGFI), 409–429 (ELII…LNIV), and 452–472 (LVSI…MLFG).

This sequence belongs to the complex I subunit 2 family. NDH-1 is composed of 14 different subunits. Subunits NuoA, H, J, K, L, M, N constitute the membrane sector of the complex.

It is found in the cell inner membrane. The catalysed reaction is a quinone + NADH + 5 H(+)(in) = a quinol + NAD(+) + 4 H(+)(out). Its function is as follows. NDH-1 shuttles electrons from NADH, via FMN and iron-sulfur (Fe-S) centers, to quinones in the respiratory chain. The immediate electron acceptor for the enzyme in this species is believed to be ubiquinone. Couples the redox reaction to proton translocation (for every two electrons transferred, four hydrogen ions are translocated across the cytoplasmic membrane), and thus conserves the redox energy in a proton gradient. The chain is NADH-quinone oxidoreductase subunit N from Orientia tsutsugamushi (strain Ikeda) (Rickettsia tsutsugamushi).